The following is a 530-amino-acid chain: Na(+)/H(+) antiporter NhaB (530 aa).

Transmembrane regions (helical) follow at residues 13-33 (FLGK…IINP), 34-54 (FVFF…EFIF), 64-84 (PLQP…TSPA), 90-110 (LVAN…IYFM), 113-133 (LLLY…LLSL), 136-156 (CLMA…AVVI), 205-225 (LLMH…VGEP), 234-254 (AGWL…PVFM), 306-326 (ALIA…VGLI), 351-371 (EEAL…AVII), 378-400 (PIIS…IANG), 450-470 (ATPN…APLI), and 481-501 (ALPY…FMLL).

It belongs to the NhaB Na(+)/H(+) (TC 2.A.34) antiporter family.

It localises to the cell inner membrane. It catalyses the reaction 2 Na(+)(in) + 3 H(+)(out) = 2 Na(+)(out) + 3 H(+)(in). Na(+)/H(+) antiporter that extrudes sodium in exchange for external protons. The protein is Na(+)/H(+) antiporter NhaB of Photobacterium profundum (strain SS9).